A 527-amino-acid polypeptide reads, in one-letter code: Catalase (527 aa).

Residues 1–22 (MADSRDPASDQMKQWKEQRAPQ) show a composition bias toward basic and acidic residues. The segment at 1 to 34 (MADSRDPASDQMKQWKEQRAPQKPDVLTTGGGNP) is disordered. Alanine 2 bears the N-acetylalanine mark. Serine 9 bears the Phosphoserine mark. Lysine 13 bears the N6-succinyllysine mark. Catalysis depends on residues histidine 75 and asparagine 148. Positions 194, 201, 203, and 213 each coordinate NADP(+). Residue lysine 221 is modified to N6-succinyllysine. An N6-acetyllysine modification is found at lysine 233. Residues lysine 237, tryptophan 303, histidine 305, and lysine 306 each contribute to the NADP(+) site. Lysine 306 carries the post-translational modification N6-acetyllysine; alternate. At lysine 306 the chain carries N6-succinyllysine; alternate. Tyrosine 358 serves as a coordination point for heme. A phosphoserine mark is found at serine 417 and serine 434. Lysine 449 and lysine 480 each carry N6-acetyllysine; alternate. Lysine 449 and lysine 480 each carry N6-succinyllysine; alternate. The residue at position 511 (threonine 511) is a Phosphothreonine. The residue at position 517 (serine 517) is a Phosphoserine. At lysine 522 the chain carries N6-succinyllysine. The Microbody targeting signal; atypical signature appears at 524-527 (KANL).

Belongs to the catalase family. As to quaternary structure, homotetramer. Interacts (via microbody targeting signal) with PEX5, monomeric form interacts with PEX5, leading to its translocation into peroxisomes. Requires heme as cofactor. NADP(+) serves as cofactor. Expressed in renal proximal tubules (at protein level).

Its subcellular location is the peroxisome matrix. It catalyses the reaction 2 H2O2 = O2 + 2 H2O. Catalyzes the degradation of hydrogen peroxide (H(2)O(2)) generated by peroxisomal oxidases to water and oxygen, thereby protecting cells from the toxic effects of hydrogen peroxide. Promotes growth of cells including T-cells, B-cells, myeloid leukemia cells, melanoma cells, mastocytoma cells and normal and transformed fibroblast cells. The protein is Catalase (Cat) of Rattus norvegicus (Rat).